The following is a 148-amino-acid chain: Large ribosomal subunit protein bL9 (148 aa).

The protein belongs to the bacterial ribosomal protein bL9 family.

Functionally, binds to the 23S rRNA. The polypeptide is Large ribosomal subunit protein bL9 (Chromohalobacter salexigens (strain ATCC BAA-138 / DSM 3043 / CIP 106854 / NCIMB 13768 / 1H11)).